Here is a 181-residue protein sequence, read N- to C-terminus: Large ribosomal subunit protein eL18 (181 aa).

Residues 152-181 (WGKAPGQRGSHSAPYVRSEGRKFERAHGLK) are disordered. Over residues 169–181 (SEGRKFERAHGLK) the composition is skewed to basic and acidic residues.

It belongs to the eukaryotic ribosomal protein eL18 family.

The protein resides in the cytoplasm. The polypeptide is Large ribosomal subunit protein eL18 (RPL18) (Tetrahymena thermophila).